The chain runs to 182 residues: Gremlin-1 (182 aa).

Residues 1–24 form the signal peptide; the sequence is MNCLVYALGSLFLLSGLLLPSSEG. A disordered region spans residues 23-65; it reads EGKKKVSGSQGAIPPPDKGQPNDSEQGQAQPGDRVRGKGKGQA. Asn44 carries an N-linked (GlcNAc...) asparagine glycan. 4 cysteine pairs are disulfide-bonded: Cys92/Cys142, Cys106/Cys156, Cys116/Cys174, and Cys120/Cys176. Residues 92–182 form the CTCK domain; the sequence is CKTQPLKQTI…QCRCISIDLD (91 aa).

The protein belongs to the DAN family.

It is found in the secreted. In terms of biological role, cytokine that has an axial patterning activity. Acts like BMP antagonist in embryonic explants. Blocks the BMP2 activity. The sequence is that of Gremlin-1 (grem1) from Xenopus laevis (African clawed frog).